The sequence spans 306 residues: Uracil phosphoribosyltransferase homolog (306 aa).

Disordered stretches follow at residues 1 to 28 (MATE…NPEP) and 58 to 87 (SSVP…NYDA). Polar residues-rich tracts occupy residues 13–28 (CHNQ…NPEP) and 70–79 (GGATFNSENN). Residues Arg130, Arg139, and 173 to 176 (EKGN) contribute to the GTP site. Arg183 is a binding site for 5-phospho-alpha-D-ribose 1-diphosphate. 2 residues coordinate GTP: Arg200 and Arg229. A 5-phospho-alpha-D-ribose 1-diphosphate-binding site is contributed by 235–243 (YPILSTGNT). 296–298 (THF) contacts uracil.

Belongs to the UPRTase family.

It is found in the cytoplasm. It localises to the nucleus. In Bos taurus (Bovine), this protein is Uracil phosphoribosyltransferase homolog (UPRT).